The following is a 1021-amino-acid chain: MTERAAAAPRGPYGAWLCLLVALALEVVRVGSNQNTLDPIYLPVALELLDAPEHFRVQQVGHYPPANSSLGSRSETFLLMQPWPRAQPLLRASYPPFATQQVVPPRVTEPHRRPVPWDVRAVSVEAAVTPAEPYARVLFHLKGQDWPPGPGSLPCARLHATHPAGTAHQACRFQPSLGACVVELQFPSQWFSQSATTRAELAYTLEPAGEGPGGCGPGTEEEPKEQALPVGSVELHPEDPPQHQEVPLDEVVTLRAPDVPVRPGQLFTATLLLRHNFTASLLTLRIKVKKGLQVTAARPAQPTFWTAKLDRFKGSKHHTSLITCHRTGPAGPDSRPLELPEFLWVDFAVENSTGGGVAVTRPVTWQLEYPGQAPEAEKDKMVWEILFSERDIRALIPLAKAEELVNTAPLTGVPQRIPVRLVTVDSGGALEEVTEHIGCESANTQVLQVSEACDAVFVAGQESRGAKGVRVDFWWRRLRASLKLTVWAPLLPLRIELTDTTLEQIRGWRVPGPAEGQLEPEAAAEEVERRSRGCRLQYQRAGVRFLVPFAAHPLDGGRRLTHLLGPDWLLDVSHLVAAHAHVQDPRIATLEGGRILVGREPGVTSIEVRSPLSDSILGEQALAVTDDKVSVLDLRVQPVMGISLSLSRGVSHPGEVTATCWAQSALPAPKQEVALSLWLSFSDHTLAPAELYDRNDLGLSVSAEEPSAVVPAEEQRAQLGVVVSGVGAKGLPLHVALHPPEPCRRGRHRVPLASGTAWLGLPPLPTPAPALPSSPARTPPFTEASVEGKRQVAGDMGSHVGPGIRGKFERAEEEAGKEENEAKEEEEDEEEMVPAPQRVTDLELGMYALLGIFCLAFLIFLVNGVVFVLRYQRKEPPDSVTDPASPQPHNWVWLGTNQEELSRQLDRCSSSSPPKGEGGCPCESGAGGDTSTVAPSASESPAGSTSTLARKEAGGRRKRVEFVTFAPAPPAQEAPEEPVGAPAVQSILVAGEEDIRWVCEDMGLKDPEELRNYMERIRGSS.

A signal peptide spans 1–32 (MTERAAAAPRGPYGAWLCLLVALALEVVRVGS). The Extracellular portion of the chain corresponds to 33 to 848 (NQNTLDPIYL…VTDLELGMYA (816 aa)). The interval 207-226 (PAGEGPGGCGPGTEEEPKEQ) is disordered. Asn276 carries an N-linked (GlcNAc...) asparagine glycan. The tract at residues 606–913 (IEVRSPLSDS…QLDRCSSSSP (308 aa)) is binds to HSPA5/GRP78. The interval 666-1021 (LPAPKQEVAL…NYMERIRGSS (356 aa)) is confers cellular localization similar to full-length form. The disordered stretch occupies residues 793 to 835 (AGDMGSHVGPGIRGKFERAEEEAGKEENEAKEEEEDEEEMVPA). The segment covering 806 to 820 (GKFERAEEEAGKEEN) has biased composition (basic and acidic residues). Residues 821 to 832 (EAKEEEEDEEEM) show a composition bias toward acidic residues. A helical transmembrane segment spans residues 849-869 (LLGIFCLAFLIFLVNGVVFVL). Over 870 to 1021 (RYQRKEPPDS…NYMERIRGSS (152 aa)) the chain is Cytoplasmic. The disordered stretch occupies residues 903–955 (RQLDRCSSSSPPKGEGGCPCESGAGGDTSTVAPSASESPAGSTSTLARKEAGG). Positions 929 to 948 (DTSTVAPSASESPAGSTSTL) are enriched in polar residues.

The protein belongs to the TMEM132 family. Interacts with HSPA5/GRP78. As to expression, expressed in the brain in neuronal cells of the hypothalamus, thalamus, cerebral cortex, amygdala, and cerebellum.

Its subcellular location is the golgi apparatus membrane. The protein resides in the endoplasmic reticulum membrane. In terms of biological role, may play a role in embryonic and postnatal development of the brain. Increased resistance to cell death induced by serum starvation in cultured cells. Regulates cAMP-induced GFAP gene expression via STAT3 phosphorylation. The chain is Transmembrane protein 132A (Tmem132a) from Rattus norvegicus (Rat).